A 229-amino-acid polypeptide reads, in one-letter code: Choline-phosphate cytidylyltransferase (229 aa).

CDP-choline contacts are provided by Leu6, Ala8, Gly9, Tyr80, Asn82, Ser85, and Ala101. Mg(2+) is bound at residue Asp102. Residue Tyr185 participates in CDP-choline binding. Mg(2+) contacts are provided by Glu211 and Asp213.

The protein belongs to the LicC/PntC cytidylyltransferase family. As to quaternary structure, monomer. Forms dimers in LicC-CDP-Cho-Mg(2+) crystals, but the monomer is probably the biologically functional unit. Requires Mg(2+) as cofactor.

It carries out the reaction phosphocholine + CTP + H(+) = CDP-choline + diphosphate. It participates in cell wall biogenesis; teichoic acid biosynthesis. The protein operates within cell wall biogenesis; lipoteichoic acid biosynthesis. Mg(2+) in slight excess of CTP gives maximal activity. Strongly inhibited by Ca(2+) and several other metal ions, such as Cd(2+), Co(2+), Cu(2+), Mn(2+), Ni(2+), Zn(2+) and Fe(2+). Also inhibited by Mg(2+) at high concentrations. CDP-Cho is a competitive inhibitor with respect to CTP, whereas diphosphate is a mixed-type inhibitor with respect to CTP. Its function is as follows. Cytidylyltransferase involved in the biosynthesis of the phosphocholine containing cell wall constituents, teichoic acid and lipoteichoic acid, which are essential for cell separation and pathogenesis. Catalyzes the activation of phosphocholine (P-Cho) to CDP-choline (CDP-Cho). Can also use phosphoethanolamine and 2-aminoethylphosphonate, with much lower efficiency. Shows lower activity with dCTP, weak activity with ATP and no activity with GTP, TTP, UTP, dATP, dGTP and dTTP. This chain is Choline-phosphate cytidylyltransferase, found in Streptococcus pneumoniae (strain ATCC BAA-255 / R6).